We begin with the raw amino-acid sequence, 971 residues long: E3 ubiquitin-protein ligase MIB2 (971 aa).

The 80-residue stretch at 1–80 folds into the MIB/HERC2 1 domain; that stretch reads MDLDPHAGVQ…AHDLLLYDNA (80 aa). A ZZ-type zinc finger spans residues 86–138; the sequence is HPNIICDCCKKHGLRGMRWKCRVCFDYDLCTQCYMHNKHDLTHAFERYETSHS. Zn(2+) is bound by residues cysteine 91, cysteine 94, cysteine 106, cysteine 109, cysteine 115, cysteine 118, histidine 124, and histidine 128. The region spanning 149-227 is the MIB/HERC2 2 domain; sequence LPRIPLRGIF…KVDLKCVGEA (79 aa). Serine 251 is modified (phosphoserine). ANK repeat units lie at residues 478 to 507, 511 to 540, 544 to 573, 577 to 609, 613 to 642, 647 to 677, 681 to 710, 714 to 742, and 783 to 812; these read QGRT…SVDL, EGNT…GVDA, TRST…DVNL, HADT…DVTA, QGFT…QLVD, DGFT…DVNV, KLQS…NVNT, EGDT…DPGP, and RGRS…ERQA. 2 consecutive RING-type zinc fingers follow at residues 848-883 and 927-960; these read CLVC…IRCQ and CPIC…PICR.

Interacts with actin monomer. In terms of processing, ubiquitinated. Possibly via autoubiquitination.

The protein resides in the cytoplasm. It is found in the endosome. It carries out the reaction S-ubiquitinyl-[E2 ubiquitin-conjugating enzyme]-L-cysteine + [acceptor protein]-L-lysine = [E2 ubiquitin-conjugating enzyme]-L-cysteine + N(6)-ubiquitinyl-[acceptor protein]-L-lysine.. It participates in protein modification; protein ubiquitination. Its function is as follows. E3 ubiquitin-protein ligase that mediates ubiquitination of Delta receptors, which act as ligands of Notch proteins. Positively regulates the Delta-mediated Notch signaling by ubiquitinating the intracellular domain of Delta, leading to endocytosis of Delta receptors. The polypeptide is E3 ubiquitin-protein ligase MIB2 (Mib2) (Rattus norvegicus (Rat)).